We begin with the raw amino-acid sequence, 584 residues long: Isocitrate dehydrogenase kinase/phosphatase (584 aa).

ATP is bound by residues 315–321 and Lys336; that span reads APGVKGM. Residue Asp371 is part of the active site.

It belongs to the AceK family.

It is found in the cytoplasm. The catalysed reaction is L-seryl-[isocitrate dehydrogenase] + ATP = O-phospho-L-seryl-[isocitrate dehydrogenase] + ADP + H(+). Its function is as follows. Bifunctional enzyme which can phosphorylate or dephosphorylate isocitrate dehydrogenase (IDH) on a specific serine residue. This is a regulatory mechanism which enables bacteria to bypass the Krebs cycle via the glyoxylate shunt in response to the source of carbon. When bacteria are grown on glucose, IDH is fully active and unphosphorylated, but when grown on acetate or ethanol, the activity of IDH declines drastically concomitant with its phosphorylation. This is Isocitrate dehydrogenase kinase/phosphatase from Serratia proteamaculans (strain 568).